The sequence spans 1081 residues: Zinc finger protein 827 (1081 aa).

Residues 1-10 (MPRRKQEQPK) show a composition bias toward basic and acidic residues. The segment at 1-14 (MPRRKQEQPKRLPS) is mediates direct interaction with RBBP4. The tract at residues 1-77 (MPRRKQEQPK…DTSLGSTTPS (77 aa)) is disordered. The short motif at 3–5 (RRK) is the RRK motif; mediates NuRD recruitment to telomeres element. Residues 62 to 77 (EQSTSPDTSLGSTTPS) are compositionally biased toward polar residues. Glycyl lysine isopeptide (Lys-Gly) (interchain with G-Cter in SUMO2) cross-links involve residues Lys176, Lys216, and Lys226. 2 disordered regions span residues 259-278 (KVSE…ASSF) and 307-348 (SSLL…SLEL). Pro residues predominate over residues 327-344 (VTPPPPPPPPPPPPPPPQ). Glycyl lysine isopeptide (Lys-Gly) (interchain with G-Cter in SUMO2) cross-links involve residues Lys360 and Lys372. C2H2-type zinc fingers lie at residues 374 to 396 (FQCP…MVIH), 402 to 424 (HQCP…MKVH), and 433 to 455 (FQCQ…MRCH). Residues Lys466, Lys475, Lys523, Lys549, Lys580, Lys587, Lys597, Lys634, Lys639, and Lys658 each participate in a glycyl lysine isopeptide (Lys-Gly) (interchain with G-Cter in SUMO2) cross-link. A Glycyl lysine isopeptide (Lys-Gly) (interchain with G-Cter in SUMO1); alternate cross-link involves residue Lys673. Residue Lys673 forms a Glycyl lysine isopeptide (Lys-Gly) (interchain with G-Cter in SUMO2); alternate linkage. Glycyl lysine isopeptide (Lys-Gly) (interchain with G-Cter in SUMO2) cross-links involve residues Lys704, Lys710, Lys742, Lys778, and Lys798. C2H2-type zinc fingers lie at residues 817–839 (FPCD…LSLH) and 845–867 (YKCH…LTVH). Glycyl lysine isopeptide (Lys-Gly) (interchain with G-Cter in SUMO2) cross-links involve residues Lys870 and Lys891. 2 consecutive C2H2-type zinc fingers follow at residues 897-919 (YSCH…MSLH) and 929-952 (ICCT…GTKH). Basic and acidic residues predominate over residues 947–960 (HIGTKHTGEDRKTP). Positions 947–996 (HIGTKHTGEDRKTPSESNSPSSSSLSALSDSANSKDDSDGSQKNKGGNNL) are disordered. Lys958 is covalently cross-linked (Glycyl lysine isopeptide (Lys-Gly) (interchain with G-Cter in SUMO2)). The segment covering 961-978 (SESNSPSSSSLSALSDSA) has biased composition (low complexity). Residues 979 to 988 (NSKDDSDGSQ) show a composition bias toward basic and acidic residues. A Glycyl lysine isopeptide (Lys-Gly) (interchain with G-Cter in SUMO2) cross-link involves residue Lys1014. 2 consecutive C2H2-type zinc fingers follow at residues 1019–1041 (FECV…LQIH) and 1047–1069 (FECD…KKCH).

Belongs to the krueppel C2H2-type zinc-finger protein family. Part of a transcription inhibitory ribonucleoprotein complex composed at least of the circular RNA circZNF827, HNRNPK and HNRNPL. Interacts with the nucleosome remodeling and histone deacetylase/NuRD complex. Interacts with RBBP4; the interaction is direct and recruits RBBP4, a component of the NuRD complex, to telomeres.

Its subcellular location is the nucleus. It localises to the chromosome. The protein localises to the telomere. As part of a ribonucleoprotein complex composed at least of HNRNPK, HNRNPL and the circular RNA circZNF827 that nucleates the complex on chromatin, may negatively regulate the transcription of genes involved in neuronal differentiation. Could also recruit the nucleosome remodeling and histone deacetylase/NuRD complex to telomeric regions of chromosomes to regulate chromatin remodeling as part of telomere maintenance. In Homo sapiens (Human), this protein is Zinc finger protein 827 (ZNF827).